The following is a 306-amino-acid chain: UDP-3-O-acyl-N-acetylglucosamine deacetylase (306 aa).

Zn(2+) is bound by residues His81, His241, and Asp245. His268 (proton donor) is an active-site residue.

It belongs to the LpxC family. Zn(2+) serves as cofactor.

The enzyme catalyses a UDP-3-O-[(3R)-3-hydroxyacyl]-N-acetyl-alpha-D-glucosamine + H2O = a UDP-3-O-[(3R)-3-hydroxyacyl]-alpha-D-glucosamine + acetate. Its pathway is glycolipid biosynthesis; lipid IV(A) biosynthesis; lipid IV(A) from (3R)-3-hydroxytetradecanoyl-[acyl-carrier-protein] and UDP-N-acetyl-alpha-D-glucosamine: step 2/6. In terms of biological role, catalyzes the hydrolysis of UDP-3-O-myristoyl-N-acetylglucosamine to form UDP-3-O-myristoylglucosamine and acetate, the committed step in lipid A biosynthesis. The chain is UDP-3-O-acyl-N-acetylglucosamine deacetylase from Hydrogenovibrio crunogenus (strain DSM 25203 / XCL-2) (Thiomicrospira crunogena).